A 115-amino-acid chain; its full sequence is U3-lycotoxin-Ls1k (115 aa).

A signal peptide spans 1-20; sequence MKFVLLFGVLLVTLFSYSSA. Positions 21–44 are excised as a propeptide; that stretch reads EMFDDFDQADEDELLSLIEKEEAR. Cystine bridges form between Cys-48–Cys-63, Cys-55–Cys-72, Cys-62–Cys-87, and Cys-74–Cys-85.

It belongs to the neurotoxin 19 (CSTX) family. 01 subfamily. In terms of tissue distribution, expressed by the venom gland.

It is found in the secreted. The chain is U3-lycotoxin-Ls1k from Lycosa singoriensis (Wolf spider).